Here is a 233-residue protein sequence, read N- to C-terminus: ATP synthase subunit a (233 aa).

Helical transmembrane passes span 27-47 (ANFVTMQLLVVAIIVVLFAIL), 85-105 (YLAFFGTIFIFILFANLIGVV), 114-134 (VPSVPAGCAIAAFFYYNIVGV), 143-163 (LAHFAGPMPLLAPLMIPIELV), 189-209 (VFLKLTFLFVPAVFMGLHVFV), and 210-230 (SFLQAYIFMLLTMMYVAGAVA).

This sequence belongs to the ATPase A chain family. F-type ATPases have 2 components, CF(1) - the catalytic core - and CF(0) - the membrane proton channel. CF(1) has five subunits: alpha(3), beta(3), gamma(1), delta(1), epsilon(1). CF(0) has three main subunits: a(1), b(2) and c(9-12). The alpha and beta chains form an alternating ring which encloses part of the gamma chain. CF(1) is attached to CF(0) by a central stalk formed by the gamma and epsilon chains, while a peripheral stalk is formed by the delta and b chains.

It is found in the cell inner membrane. Its function is as follows. Key component of the proton channel; it plays a direct role in the translocation of protons across the membrane. This chain is ATP synthase subunit a, found in Solibacter usitatus (strain Ellin6076).